We begin with the raw amino-acid sequence, 133 residues long: Small ribosomal subunit protein uS8 (133 aa).

The protein belongs to the universal ribosomal protein uS8 family. In terms of assembly, part of the 30S ribosomal subunit. Contacts proteins S5 and S12.

In terms of biological role, one of the primary rRNA binding proteins, it binds directly to 16S rRNA central domain where it helps coordinate assembly of the platform of the 30S subunit. The sequence is that of Small ribosomal subunit protein uS8 from Amoebophilus asiaticus (strain 5a2).